Consider the following 126-residue polypeptide: Holo-[acyl-carrier-protein] synthase (126 aa).

The Mg(2+) site is built by Asp9 and Glu58.

The protein belongs to the P-Pant transferase superfamily. AcpS family. The cofactor is Mg(2+).

The protein resides in the cytoplasm. It carries out the reaction apo-[ACP] + CoA = holo-[ACP] + adenosine 3',5'-bisphosphate + H(+). Transfers the 4'-phosphopantetheine moiety from coenzyme A to a Ser of acyl-carrier-protein. This Edwardsiella ictaluri (strain 93-146) protein is Holo-[acyl-carrier-protein] synthase.